The primary structure comprises 51 residues: Large ribosomal subunit protein eL39 (51 aa).

The tract at residues 32–51 (KGSVKQHPKMRHWRRNTLKK) is disordered. Positions 33–51 (GSVKQHPKMRHWRRNTLKK) are enriched in basic residues.

It belongs to the eukaryotic ribosomal protein eL39 family.

The protein is Large ribosomal subunit protein eL39 of Methanococcus vannielii (strain ATCC 35089 / DSM 1224 / JCM 13029 / OCM 148 / SB).